The chain runs to 388 residues: NADH-quinone oxidoreductase subunit D 2 (388 aa).

It belongs to the complex I 49 kDa subunit family. As to quaternary structure, NDH-1 is composed of 14 different subunits. Subunits NuoB, C, D, E, F, and G constitute the peripheral sector of the complex.

It localises to the cell membrane. The enzyme catalyses a quinone + NADH + 5 H(+)(in) = a quinol + NAD(+) + 4 H(+)(out). Its function is as follows. NDH-1 shuttles electrons from NADH, via FMN and iron-sulfur (Fe-S) centers, to quinones in the respiratory chain. The immediate electron acceptor for the enzyme in this species is believed to be a menaquinone. Couples the redox reaction to proton translocation (for every two electrons transferred, four hydrogen ions are translocated across the cytoplasmic membrane), and thus conserves the redox energy in a proton gradient. The chain is NADH-quinone oxidoreductase subunit D 2 from Salinispora tropica (strain ATCC BAA-916 / DSM 44818 / JCM 13857 / NBRC 105044 / CNB-440).